A 188-amino-acid polypeptide reads, in one-letter code: Ubiquitin-conjugating enzyme E2-21 kDa (188 aa).

One can recognise a UBC core domain in the interval 3 to 182; the sequence is STEKRLLKEY…VHYYIAKYSA (180 aa). Cysteine 119 (glycyl thioester intermediate) is an active-site residue.

It belongs to the ubiquitin-conjugating enzyme family.

The enzyme catalyses S-ubiquitinyl-[E1 ubiquitin-activating enzyme]-L-cysteine + [E2 ubiquitin-conjugating enzyme]-L-cysteine = [E1 ubiquitin-activating enzyme]-L-cysteine + S-ubiquitinyl-[E2 ubiquitin-conjugating enzyme]-L-cysteine.. It functions in the pathway protein modification; protein ubiquitination. Catalyzes the covalent attachment of ubiquitin to other proteins. Essential for peroxisome biogenesis. Required for UBC4-independent ubiquitination of PEX5. This Pichia angusta (Yeast) protein is Ubiquitin-conjugating enzyme E2-21 kDa (PEX4).